The primary structure comprises 270 residues: Regulatory protein RecX (270 aa).

This sequence belongs to the RecX family.

It localises to the cytoplasm. Modulates RecA activity. In Bacillus anthracis (strain A0248), this protein is Regulatory protein RecX.